An 87-amino-acid polypeptide reads, in one-letter code: Large ribosomal subunit protein bL27 (87 aa).

It belongs to the bacterial ribosomal protein bL27 family.

The protein is Large ribosomal subunit protein bL27 of Stenotrophomonas maltophilia (strain K279a).